Consider the following 121-residue polypeptide: Large ribosomal subunit protein bL19 (121 aa).

The protein belongs to the bacterial ribosomal protein bL19 family.

This protein is located at the 30S-50S ribosomal subunit interface and may play a role in the structure and function of the aminoacyl-tRNA binding site. This Borreliella burgdorferi (strain ZS7) (Borrelia burgdorferi) protein is Large ribosomal subunit protein bL19.